Consider the following 928-residue polypeptide: DNA-binding protein RFX6 (928 aa).

2 disordered regions span residues 1–20 and 50–98; these read MAKV…APQL and EGQP…SKTK. The RFX-type winged-helix DNA-binding region spans 124 to 199; that stretch reads TLQWLEENYI…YHYYGIGIKE (76 aa).

This sequence belongs to the RFX family. In terms of assembly, interacts with RFX3. In terms of tissue distribution, expressed in pancreas. Expressed in pancreatic beta-cells (insulin-positive cells) and alpha-cells (glucagon-positive cells) (at protein level). Specifically expressed in pancreas, small intestine and colon. Expressed in endocrine cells in the islets.

Its subcellular location is the nucleus. Transcription factor required to direct islet cell differentiation during endocrine pancreas development. Specifically required for the differentiation of 4 of the 5 islet cell types and for the production of insulin. Not required for pancreatic PP (polypeptide-producing) cells differentiation. Acts downstream of NEUROG3 and regulates the transcription factors involved in beta-cell maturation and function, thereby restricting the expression of the beta-cell differentiation and specification genes, and thus the beta-cell fate choice. Activates transcription by forming a heterodimer with RFX3 and binding to the X-box in the promoter of target genes. Involved in glucose-stimulated insulin secretion by promoting insulin and L-type calcium channel gene transcription. The polypeptide is DNA-binding protein RFX6 (RFX6) (Homo sapiens (Human)).